A 157-amino-acid polypeptide reads, in one-letter code: 2-C-methyl-D-erythritol 2,4-cyclodiphosphate synthase (157 aa).

A divalent metal cation contacts are provided by D9 and H11. 4-CDP-2-C-methyl-D-erythritol 2-phosphate is bound by residues 9–11 (DVH) and 35–36 (HS). H43 serves as a coordination point for a divalent metal cation. 4-CDP-2-C-methyl-D-erythritol 2-phosphate is bound by residues 57-59 (DIG), 62-66 (FPDTD), 101-107 (AEKPKMA), 133-136 (TTTE), F140, and R143.

Belongs to the IspF family. As to quaternary structure, homotrimer. The cofactor is a divalent metal cation.

The enzyme catalyses 4-CDP-2-C-methyl-D-erythritol 2-phosphate = 2-C-methyl-D-erythritol 2,4-cyclic diphosphate + CMP. It functions in the pathway isoprenoid biosynthesis; isopentenyl diphosphate biosynthesis via DXP pathway; isopentenyl diphosphate from 1-deoxy-D-xylulose 5-phosphate: step 4/6. Involved in the biosynthesis of isopentenyl diphosphate (IPP) and dimethylallyl diphosphate (DMAPP), two major building blocks of isoprenoid compounds. Catalyzes the conversion of 4-diphosphocytidyl-2-C-methyl-D-erythritol 2-phosphate (CDP-ME2P) to 2-C-methyl-D-erythritol 2,4-cyclodiphosphate (ME-CPP) with a corresponding release of cytidine 5-monophosphate (CMP). This is 2-C-methyl-D-erythritol 2,4-cyclodiphosphate synthase from Listeria monocytogenes serotype 4b (strain F2365).